Reading from the N-terminus, the 307-residue chain is uncharacterized protein (307 aa).

Positions 1–25 are cleaved as a signal peptide; sequence MKFQKRNIQLVLILLLILNNCFINS. A disordered region spans residues 60 to 90; it reads ENNNKNNNNNNNNNNNNNNNNKNSKVKNDDS. The span at 63–82 shows a compositional bias: low complexity; sequence NKNNNNNNNNNNNNNNNNKN. N-linked (GlcNAc...) asparagine glycans are attached at residues N124 and N173. Transmembrane regions (helical) follow at residues 244–264 and 275–295; these read IIFA…YYLA and IIGV…TIVI.

The protein resides in the membrane. This is an uncharacterized protein from Dictyostelium discoideum (Social amoeba).